The primary structure comprises 813 residues: Probable E3 ubiquitin-protein ligase hulA (813 aa).

The C2 domain occupies 1–109; sequence MGSNLPAQPN…QMGGDEMLTR (109 aa). Disordered regions lie at residues 131 to 235 and 251 to 351; these read NLST…GWER and RTTT…YFVD. Residues 148–167 show a composition bias toward polar residues; the sequence is VQSSTSSGLVPQVAPSSSHP. Positions 188 to 215 are enriched in low complexity; it reads RVPSTTRPSSTAAPASAAGAAVSNSHGS. Positions 227–260 constitute a WW 1 domain; that stretch reads GRLPAGWERREDNLGRTYYVDHNTRTTTWTRPSS. The segment covering 251-264 has biased composition (polar residues); it reads RTTTWTRPSSNYNE. Basic and acidic residues predominate over residues 265–292; that stretch reads HAQRSQREANMQLERRAHQSRMLPEDRT. Residues 293–307 show a composition bias toward polar residues; the sequence is GANSPNLPESSQQAH. The segment covering 322–331 has biased composition (low complexity); the sequence is ATGATTAGTG. WW domains follow at residues 331 to 364 and 391 to 424; these read GELP…DPRR and GPLP…DPRL. Residues 480–813 enclose the HECT domain; it reads SASDLKKRLM…VEETLGFGQE (334 aa). Cysteine 781 functions as the Glycyl thioester intermediate in the catalytic mechanism.

The protein belongs to the RSP5/NEDD4 family. Interacts with creD.

Its subcellular location is the cytoplasm. It carries out the reaction S-ubiquitinyl-[E2 ubiquitin-conjugating enzyme]-L-cysteine + [acceptor protein]-L-lysine = [E2 ubiquitin-conjugating enzyme]-L-cysteine + N(6)-ubiquitinyl-[acceptor protein]-L-lysine.. It participates in protein modification; protein ubiquitination. Its function is as follows. E3 ubiquitin-protein ligase which accepts ubiquitin from an E2 ubiquitin-conjugating enzyme in the form of a thioester and then directly transfers the ubiquitin to targeted substrates. Probably involved in the regulatory network controlling carbon source utilization. This is Probable E3 ubiquitin-protein ligase hulA (hulA) from Aspergillus fumigatus (strain CBS 144.89 / FGSC A1163 / CEA10) (Neosartorya fumigata).